Here is a 324-residue protein sequence, read N- to C-terminus: MSSSEQLDDGFTGLKVIAKTEIAQGIFRFELAHPQGMLLPAFTAGAHLRVRVPNGSIRNYSLSNDPQERERYVIAVKRDANGRGGSVSMADDIEAGDLLPVATPQNEFELIENARQFIFVAGGIGITPILSMMRHLKASTDLPFKLYYCTRNPELTAFRDELLGAEFANTVVIHHDFGNRADAYDFWPVFDKPSSGTHVYCCGPRPLMDSVLDMTGHWPPGSIHFESFGVDQSRFAENRPFSVTLGRSGIDLEIPVDRSILEVLRDNGIRAPSSCESGTCGSCRTRLIEGDVEHRDMVLREDEQHDQIMICVSRARNDVLVLDL.

Positions 9–111 (DGFTGLKVIA…ATPQNEFELI (103 aa)) constitute an FAD-binding FR-type domain. 115–229 (RQFIFVAGGI…PGSIHFESFG (115 aa)) contacts NAD(+). Residues 241-324 (FSVTLGRSGI…ARNDVLVLDL (84 aa)) enclose the 2Fe-2S ferredoxin-type domain. The [2Fe-2S] cluster site is built by C275, C280, C283, and C311.

It belongs to the PDR/VanB family. As to quaternary structure, this dioxygenase system consists of two proteins: phthalate oxygenase and phthalate oxygenase reductase. It depends on FMN as a cofactor.

It catalyses the reaction phthalate + NADH + O2 + H(+) = cis-4,5-dihydroxycyclohexa-2,6-diene-1,2-dicarboxylate + NAD(+). Its pathway is xenobiotic degradation; phthalate degradation; 3,4-dihydroxybenzoate from phthalate: step 1/3. The sequence is that of Phthalate 4,5-dioxygenase oxygenase reductase subunit (pht2) from Pseudomonas putida (Arthrobacter siderocapsulatus).